Consider the following 101-residue polypeptide: NADH-quinone oxidoreductase subunit K (101 aa).

Transmembrane regions (helical) follow at residues 4 to 24, 30 to 50, and 61 to 81; these read LTHF…GIFL, IILL…FIAF, and IFVF…LAIL.

This sequence belongs to the complex I subunit 4L family. As to quaternary structure, NDH-1 is composed of 14 different subunits. Subunits NuoA, H, J, K, L, M, N constitute the membrane sector of the complex.

Its subcellular location is the cell inner membrane. It carries out the reaction a quinone + NADH + 5 H(+)(in) = a quinol + NAD(+) + 4 H(+)(out). Functionally, NDH-1 shuttles electrons from NADH, via FMN and iron-sulfur (Fe-S) centers, to quinones in the respiratory chain. The immediate electron acceptor for the enzyme in this species is believed to be ubiquinone. Couples the redox reaction to proton translocation (for every two electrons transferred, four hydrogen ions are translocated across the cytoplasmic membrane), and thus conserves the redox energy in a proton gradient. In Chromobacterium violaceum (strain ATCC 12472 / DSM 30191 / JCM 1249 / CCUG 213 / NBRC 12614 / NCIMB 9131 / NCTC 9757 / MK), this protein is NADH-quinone oxidoreductase subunit K.